Consider the following 263-residue polypeptide: MLQPVWHACILAILGVFIFHVGEVRSQCWESNKCTDLSSEDGILECIKACKMDLSAESPVFPGNGHIQPLSENIRKYVMSHFRWNKFGRRNSTSNDNNNNNGGYKREDIANYPILNLFLGSDNQNTQEGIMEDDALDRQDSKRSYSMEHFRWGKPVGKKRRPIKVFPTDAEEESSESFPIELRRELSLEFDYPDTNSEEELDNGELLEGPVKKGRKYKMHHFRWEGPPKDKRYGGFMTPERSQTPLMTLFKNAIIKNAHKKGQ.

A signal peptide spans 1-26 (MLQPVWHACILAILGVFIFHVGEVRS). Position 27 is a pyrrolidone carboxylic acid (Gln-27). Residue Phe-87 is modified to Phenylalanine amide. N-linked (GlcNAc...) asparagine glycosylation is present at Asn-91. The propeptide occupies 107–141 (EDIANYPILNLFLGSDNQNTQEGIMEDDALDRQDS). Position 156 is a valine amide (Val-156).

It belongs to the POMC family. Specific enzymatic cleavages at paired basic residues yield the different active peptides.

The protein localises to the secreted. Its function is as follows. Stimulates the adrenal glands to release cortisol. In terms of biological role, anorexigenic peptide. Increases the pigmentation of skin by increasing melanin production in melanocytes. Increases the pigmentation of skin by increasing melanin production in melanocytes. Functionally, endogenous orexigenic opiate. Its function is as follows. Endogenous opiate. The polypeptide is Pro-opiomelanocortin (pomc) (Aquarana catesbeiana (American bullfrog)).